The following is a 472-amino-acid chain: Ulvan lyase (472 aa).

The N-terminal stretch at 1–21 (MIIKQYLLKISLCVLLLGCDS) is a signal peptide. Asn-46 and Asn-109 together coordinate substrate. His-110 serves as the catalytic Proton donor. Substrate is bound by residues Lys-112 and His-130. Catalysis depends on Tyr-175, which acts as the Proton acceptor. Residues Arg-191, His-195, and Tyr-233 each coordinate substrate. His-195 contributes to the Zn(2+) binding site. Zn(2+) is bound by residues His-251, Cys-253, and His-265. Residue His-265 participates in substrate binding.

The protein belongs to the polysaccharide lyase 25 family.

Functionally, ulvan lyase involved in ulvan degradation. Ulvan is the main polysaccharide component of the Ulvales (green seaweed) cell wall. It is composed of disaccharide building blocks comprising 3-sulfated rhamnose (Rha3S) linked to D-glucuronic acid (GlcA), L-iduronic acid (IduA), or D-xylose (Xyl). Ulvan lyase catalyzes the endolytic cleavage of the glycosidic bond between Rha3S and the uronic acids GlcA or IduA, producing oligosaccharides that have unsaturated 4-deoxy-L-threo-hex-4-enopyranosiduronic acid (deltaUA) at the non-reducing end. This results eventually in the degradation of the ulvan polysaccharide into deltaUA-Rha3S disaccharides and deltaUA-Rha3S-Xyl-Rha3S tetrasaccharides. The protein is Ulvan lyase of Nonlabens ulvanivorans (Persicivirga ulvanivorans).